The chain runs to 359 residues: Homeotic protein knotted-1 (359 aa).

2 disordered regions span residues 1 to 34 (MEEI…PWAS) and 213 to 232 (LSSG…TELP). The segment covering 16–31 (GHGHGQHHHHHHHHHP) has biased composition (basic residues). In terms of domain architecture, ELK spans 242–262 (ELKHHLLKKYSGYLSSLKQEL). A DNA-binding region (homeobox; TALE-type) is located at residues 263–326 (SKKKKKGKLP…NQRKRHWKPS (64 aa)).

This sequence belongs to the TALE/KNOX homeobox family. As to quaternary structure, forms homodimers. Binds to MBP2C; this interaction reduces RNA binding capacity. As to expression, expressed in apical meristems of vegetative and floral stems as well as in the underlying ground meristem. Specifically expressed in vascular bundles developing both in the leaf and stem. Very low levels of expression in leaves.

It localises to the nucleus. Its subcellular location is the cell junction. The protein resides in the plasmodesma. The protein localises to the cytoplasm. In terms of biological role, binds to RNA. Possible transcription factor that regulates genes involved in development. Mutations in KN-1 alter leaf development. Foci of cells along the lateral vein do not differentiate properly but continue to divide, forming knots. May participate in the switch from indeterminate to determinate cell fates. Probably binds to the DNA sequence 5'-TGAC-3'. In Zea mays (Maize), this protein is Homeotic protein knotted-1 (KN-1).